Consider the following 259-residue polypeptide: tRNA pseudouridine synthase A (259 aa).

Asp-52 serves as the catalytic Nucleophile. Residue Tyr-110 coordinates substrate.

The protein belongs to the tRNA pseudouridine synthase TruA family. Homodimer.

It catalyses the reaction uridine(38/39/40) in tRNA = pseudouridine(38/39/40) in tRNA. Its function is as follows. Formation of pseudouridine at positions 38, 39 and 40 in the anticodon stem and loop of transfer RNAs. The polypeptide is tRNA pseudouridine synthase A (Coprothermobacter proteolyticus (strain ATCC 35245 / DSM 5265 / OCM 4 / BT)).